The following is a 466-amino-acid chain: 3-isopropylmalate dehydratase large subunit (466 aa).

[4Fe-4S] cluster contacts are provided by Cys347, Cys407, and Cys410.

The protein belongs to the aconitase/IPM isomerase family. LeuC type 1 subfamily. In terms of assembly, heterodimer of LeuC and LeuD. [4Fe-4S] cluster is required as a cofactor.

It carries out the reaction (2R,3S)-3-isopropylmalate = (2S)-2-isopropylmalate. It participates in amino-acid biosynthesis; L-leucine biosynthesis; L-leucine from 3-methyl-2-oxobutanoate: step 2/4. Catalyzes the isomerization between 2-isopropylmalate and 3-isopropylmalate, via the formation of 2-isopropylmaleate. This chain is 3-isopropylmalate dehydratase large subunit, found in Shewanella woodyi (strain ATCC 51908 / MS32).